Here is a 66-residue protein sequence, read N- to C-terminus: Large ribosomal subunit protein bL31 (66 aa).

4 residues coordinate Zn(2+): C16, C18, C36, and C39.

The protein belongs to the bacterial ribosomal protein bL31 family. Type A subfamily. In terms of assembly, part of the 50S ribosomal subunit. The cofactor is Zn(2+).

Its function is as follows. Binds the 23S rRNA. This chain is Large ribosomal subunit protein bL31, found in Geobacter metallireducens (strain ATCC 53774 / DSM 7210 / GS-15).